Reading from the N-terminus, the 772-residue chain is Heat shock protein 88 (772 aa).

Disordered stretches follow at residues 496–519 (TAAP…AEEK) and 729–772 (LGKP…DILD). Over residues 497 to 513 (AAPAETPAETPANGEAA) the composition is skewed to low complexity. A compositionally biased stretch (basic and acidic residues) spans 735–772 (KPVEVPKEEPKDTPMESKDAPAEEPVATKDQKMDDILD).

Belongs to the heat shock protein 70 family.

Functionally, may function in protein folding and assembly, and disassembly of protein complexes. The chain is Heat shock protein 88 (hspH) from Dictyostelium discoideum (Social amoeba).